Consider the following 206-residue polypeptide: Outer-membrane lipoprotein LolB (206 aa).

The first 18 residues, 1-18 (MKTFKFFTALFATAILTA), serve as a signal peptide directing secretion. Residue Cys-19 is the site of N-palmitoyl cysteine attachment. The S-diacylglycerol cysteine moiety is linked to residue Cys-19.

The protein belongs to the LolB family. Monomer.

The protein localises to the cell outer membrane. Plays a critical role in the incorporation of lipoproteins in the outer membrane after they are released by the LolA protein. The chain is Outer-membrane lipoprotein LolB from Haemophilus influenzae (strain PittGG).